We begin with the raw amino-acid sequence, 497 residues long: Virion host shutoff protein (497 aa).

2 disordered regions span residues 122–142 (EHDT…PPQD) and 280–373 (SVIS…SAEA). The segment covering 309 to 326 (PNERRVISWRRQDDHDYD) has biased composition (basic and acidic residues). Acidic residues predominate over residues 327-344 (SSTEDSDQSDSSEEEEEC).

The protein belongs to the herpesviridae VHS protein family.

Its subcellular location is the virion. Functionally, minor structural protein that acts as an endoribonuclease during lytic infection. Degrades host mRNAs in the cytoplasm by cutting them at preferred sites, including some in regions of translation initiation. The polypeptide is Virion host shutoff protein (Equine herpesvirus 1 (strain Ab4p) (EHV-1)).